The primary structure comprises 160 residues: Ureidoglycolate lyase (160 aa).

Belongs to the ureidoglycolate lyase family. As to quaternary structure, homodimer. It depends on Ni(2+) as a cofactor.

It catalyses the reaction (S)-ureidoglycolate = urea + glyoxylate. It functions in the pathway nitrogen metabolism; (S)-allantoin degradation. In terms of biological role, catalyzes the catabolism of the allantoin degradation intermediate (S)-ureidoglycolate, generating urea and glyoxylate. Involved in the anaerobic utilization of allantoin as sole nitrogen source. Reinforces the induction of genes involved in the degradation of allantoin and glyoxylate by producing glyoxylate. This Escherichia coli O6:H1 (strain CFT073 / ATCC 700928 / UPEC) protein is Ureidoglycolate lyase.